The primary structure comprises 119 residues: C-C motif chemokine 24 (119 aa).

The first 26 residues, methionine 1–serine 26, serve as a signal peptide directing secretion. Disulfide bonds link cysteine 33–cysteine 58 and cysteine 34–cysteine 74. The N-linked (GlcNAc...) asparagine glycan is linked to asparagine 115.

It belongs to the intercrine beta (chemokine CC) family. In terms of processing, N-glycosylated. As to expression, activated monocytes and activated T lymphocytes.

It localises to the secreted. Functionally, chemotactic for resting T-lymphocytes, and eosinophils. Has lower chemotactic activity for neutrophils but none for monocytes and activated lymphocytes. Is a strong suppressor of colony formation by a multipotential hematopoietic progenitor cell line. Binds to CCR3. This Homo sapiens (Human) protein is C-C motif chemokine 24.